A 1093-amino-acid polypeptide reads, in one-letter code: Non-canonical non-ribosomal peptide synthetase ascB (1093 aa).

Residues 1-26 (MTVNGHHTNGVNGANGTNGHANGSNG) are compositionally biased toward low complexity. A disordered region spans residues 1–27 (MTVNGHHTNGVNGANGTNGHANGSNGI). Positions 35 to 392 (EIVPFVKPQV…LSLTFAPTDN (358 aa)) are adenylation (A) domain. The Carrier domain maps to 591–678 (DNLEQNLKSL…EIAAALTKGS (88 aa)). Ser627 bears the O-(pantetheine 4'-phosphoryl)serine mark. The tract at residues 721–971 (LTGATGSLGS…IPVDDAASTV (251 aa)) is thioester reductase (TR) domain.

It belongs to the NRP synthetase family.

The catalysed reaction is ilicicolinate B + AH2 + ATP = ilicicolin B + A + AMP + diphosphate. It participates in secondary metabolite biosynthesis; terpenoid biosynthesis. In terms of biological role, non-canonical non-ribosomal peptide synthetase; part of the asc-1 gene cluster that mediates the biosynthesis of both ascochlorin and ascofuranone, a strong inhibitor of cyanide-insensitive alternative oxidases and a promising drug candidate against African trypanosomiasis. The first step in the pathway is performed by the non-reducing polyketide synthase ascC that produces orsellinic acid by condensing acetyl-CoA with 3 malonyl-CoA units. Orsellinic acid is then prenylated by the prenyltransferase ascA to yield ilicicolinic acid B. Ilicicolinic acid B is further reduced to ilicicolin B by the reductase ascB. The halogenase ascD then chlorinates ilicicolin B to produce ilicicolin A which is converted to ilicicolin A epoxide by the cytochrome P450 monooxygenase ascE that catalyzes stereoselective epoxidation of the terminal double bond of the prenyl group. Ilicicolin A epoxide is the last common precursor for the biosynthesis of ascofuranone and ascochlorin. The terpene cyclase ascF produces a monocyclic terpene, and the cyclization reaction is proposed to be initiated by protonation of the terminal epoxide of ilicicolin A epoxide to generate a monocyclic tertiarycation, which is followed by a series of hydride and methyl shifts with abstraction of proton, leading to the formation of the (14S,15R,19R)-trimethylcyclohexanone ring structure of ilicicolin C, which is finally reduced to ascochlorin by the dehydrogenase ascG. On the other hand, ilicicolin A epoxide is hydroxylated by the cytochrome P450 monooxygenase ascH, and the resultant product is cyclized by the terpene cyclase ascI to ascofuranol via protonation-initiated epoxide ring opening, which facilitates the 6-endo-tet cyclization to form the tetrahy-drofuran ring. Finally, ascofuranol is oxidized into ascofuranone by ascJ. This Acremonium egyptiacum (Oospora egyptiaca) protein is Non-canonical non-ribosomal peptide synthetase ascB.